Consider the following 214-residue polypeptide: Outer-membrane lipoprotein carrier protein (214 aa).

Residues 1-23 (MNKRITVLSLLLATSLSSAAAMA) form the signal peptide.

The protein belongs to the LolA family. Monomer.

The protein localises to the periplasm. Functionally, participates in the translocation of lipoproteins from the inner membrane to the outer membrane. Only forms a complex with a lipoprotein if the residue after the N-terminal Cys is not an aspartate (The Asp acts as a targeting signal to indicate that the lipoprotein should stay in the inner membrane). The polypeptide is Outer-membrane lipoprotein carrier protein (Shewanella frigidimarina (strain NCIMB 400)).